The chain runs to 280 residues: Orotidine 5'-phosphate decarboxylase (280 aa).

K97 acts as the Proton donor in catalysis.

Belongs to the OMP decarboxylase family. Type 2 subfamily.

The catalysed reaction is orotidine 5'-phosphate + H(+) = UMP + CO2. Its pathway is pyrimidine metabolism; UMP biosynthesis via de novo pathway; UMP from orotate: step 2/2. This chain is Orotidine 5'-phosphate decarboxylase (pyrF), found in Corynebacterium efficiens (strain DSM 44549 / YS-314 / AJ 12310 / JCM 11189 / NBRC 100395).